A 273-amino-acid chain; its full sequence is Zinc finger protein 80 (273 aa).

2 C2H2-type zinc fingers span residues 49-71 and 77-99; these read YKCK…QQIH and YECQ…MRIH. The segment at 105–127 adopts a C2H2-type 3; atypical zinc-finger fold; that stretch reads CKCVECGKVFNRRSHLLCYRQIH. C2H2-type zinc fingers lie at residues 133–155, 161–183, 189–211, and 217–239; these read YECS…RVTH, FGCK…MKIH, CKCS…SMTH, and YECK…TRSH.

This sequence belongs to the krueppel C2H2-type zinc-finger protein family.

It is found in the nucleus. May be involved in transcriptional regulation. This Homo sapiens (Human) protein is Zinc finger protein 80 (ZNF80).